Consider the following 206-residue polypeptide: Small ribosomal subunit protein uS4 (206 aa).

The 61-residue stretch at 96–156 folds into the S4 RNA-binding domain; that stretch reads RRLDNVVYRM…EKSKNQLRIK (61 aa).

This sequence belongs to the universal ribosomal protein uS4 family. As to quaternary structure, part of the 30S ribosomal subunit. Contacts protein S5. The interaction surface between S4 and S5 is involved in control of translational fidelity.

Its function is as follows. One of the primary rRNA binding proteins, it binds directly to 16S rRNA where it nucleates assembly of the body of the 30S subunit. With S5 and S12 plays an important role in translational accuracy. In Hahella chejuensis (strain KCTC 2396), this protein is Small ribosomal subunit protein uS4.